Consider the following 689-residue polypeptide: DNA-directed RNA polymerase subunit beta' (689 aa).

Residues Cys69, Cys71, Cys87, and Cys90 each contribute to the Zn(2+) site. Mg(2+) is bound by residues Asp489, Asp491, and Asp493.

Belongs to the RNA polymerase beta' chain family. RpoC1 subfamily. As to quaternary structure, in plastids the minimal PEP RNA polymerase catalytic core is composed of four subunits: alpha, beta, beta', and beta''. When a (nuclear-encoded) sigma factor is associated with the core the holoenzyme is formed, which can initiate transcription. It depends on Mg(2+) as a cofactor. Zn(2+) serves as cofactor.

It is found in the plastid. Its subcellular location is the chloroplast. The enzyme catalyses RNA(n) + a ribonucleoside 5'-triphosphate = RNA(n+1) + diphosphate. Functionally, DNA-dependent RNA polymerase catalyzes the transcription of DNA into RNA using the four ribonucleoside triphosphates as substrates. This is DNA-directed RNA polymerase subunit beta' from Helianthus annuus (Common sunflower).